Consider the following 906-residue polypeptide: Valine--tRNA ligase (906 aa).

The short motif at 43–53 (PNVTGSLHIGH) is the 'HIGH' region element. The 'KMSKS' region signature appears at 548-552 (KMSKS). Lys-551 lines the ATP pocket. A coiled-coil region spans residues 842 to 905 (EKARLTKDIA…EAALSRLASV (64 aa)).

The protein belongs to the class-I aminoacyl-tRNA synthetase family. ValS type 1 subfamily. Monomer.

The protein localises to the cytoplasm. It catalyses the reaction tRNA(Val) + L-valine + ATP = L-valyl-tRNA(Val) + AMP + diphosphate. In terms of biological role, catalyzes the attachment of valine to tRNA(Val). As ValRS can inadvertently accommodate and process structurally similar amino acids such as threonine, to avoid such errors, it has a 'posttransfer' editing activity that hydrolyzes mischarged Thr-tRNA(Val) in a tRNA-dependent manner. The protein is Valine--tRNA ligase of Caulobacter vibrioides (strain ATCC 19089 / CIP 103742 / CB 15) (Caulobacter crescentus).